The sequence spans 2931 residues: Probable polyketide synthase 9/36 (2931 aa).

One can recognise a Ketosynthase family 3 (KS3) domain in the interval 11–442; that stretch reads EKGVAIVGIG…GSNCCLLISE (432 aa). Residues Cys181, His323, and His362 each act as for beta-ketoacyl synthase activity in the active site. The tract at residues 635-668 is acyl/malonyl transferase; sequence GVNPSFILGHSLGEISASYCSGMIDLDTFCYTVY. Ser645 serves as the catalytic For acyl/malonyl transferase activity. The N-terminal hotdog fold stretch occupies residues 925 to 1047; that stretch reads IDHLGTSNSY…ANFQLLDHGN (123 aa). The region spanning 925–1209 is the PKS/mFAS DH domain; sequence IDHLGTSNSY…CKSLIPIKDS (285 aa). The active-site Proton acceptor; for dehydratase activity is His959. The segment at 1064 to 1209 is C-terminal hotdog fold; it reads NLSKLTKNEL…CKSLIPIKDS (146 aa). Residue Asp1122 is the Proton donor; for dehydratase activity of the active site. The helical transmembrane segment at 2293 to 2313 threads the bilayer; that stretch reads LINFVMASSAISLIGSTDLCT. In terms of domain architecture, Carrier spans 2429–2506; sequence TGNKNIDELF…TSMKMILNSL (78 aa). Position 2466 is an O-(pantetheine 4'-phosphoryl)serine (Ser2466). Residues 2553–2573 traverse the membrane as a helical segment; that stretch reads KIILLTGTTGFLGGFLLFNMV.

It depends on pantetheine 4'-phosphate as a cofactor.

It localises to the membrane. Probable polyketide synthase. In Dictyostelium discoideum (Social amoeba), this protein is Probable polyketide synthase 9/36 (pks9).